The sequence spans 213 residues: Large ribosomal subunit protein bL25 (213 aa).

Positions 191-207 are enriched in low complexity; the sequence is AEPTDAPTAPAAAPGAE. Positions 191–213 are disordered; the sequence is AEPTDAPTAPAAAPGAEAPKDKA.

The protein belongs to the bacterial ribosomal protein bL25 family. CTC subfamily. As to quaternary structure, part of the 50S ribosomal subunit; part of the 5S rRNA/L5/L18/L25 subcomplex. Contacts the 5S rRNA. Binds to the 5S rRNA independently of L5 and L18.

Its function is as follows. This is one of the proteins that binds to the 5S RNA in the ribosome where it forms part of the central protuberance. The sequence is that of Large ribosomal subunit protein bL25 from Polynucleobacter asymbioticus (strain DSM 18221 / CIP 109841 / QLW-P1DMWA-1) (Polynucleobacter necessarius subsp. asymbioticus).